The following is a 144-amino-acid chain: Large ribosomal subunit protein uL16 (144 aa).

Positions 1-16 (MLIPKRVKYRKQHRPR) are enriched in basic residues. The disordered stretch occupies residues 1–25 (MLIPKRVKYRKQHRPRGNGGVSKGG).

Belongs to the universal ribosomal protein uL16 family. As to quaternary structure, part of the 50S ribosomal subunit.

Its function is as follows. Binds 23S rRNA and is also seen to make contacts with the A and possibly P site tRNAs. This Desulforamulus reducens (strain ATCC BAA-1160 / DSM 100696 / MI-1) (Desulfotomaculum reducens) protein is Large ribosomal subunit protein uL16.